The chain runs to 772 residues: NAD(P)H-quinone oxidoreductase subunit 5, chloroplastic (772 aa).

15 consecutive transmembrane segments (helical) span residues 8-28 (IWIVPVCPFVASMSVGLGLFF), 39-59 (ICAIISIFLLGIAMFISFSIF), 87-107 (FLIDPLTSTMLVSVTSVGILV), 120-140 (GYVRFFAYLSLFTASMLGLVL), 147-167 (IYIFWELVGMCSYLLIGFWFS), 185-205 (GDFGLLLGILGTYWITGSFDI), 219-239 (NGVNLFLANMCALLLFLGPAA), 258-278 (TPISALIHAATMVAAGIFFVA), 291-311 (MNIISWVGGITALLGATIALA), 395-415 (GTTFLLGTLSLCGIPPFACFW), 425-445 (WIASASLGWIAWCTAGLTGFY), 574-594 (LFSLISLAIPTLFIGFIGVPF), 631-651 (IPSVSIALVGVSISFFIYGPV), 710-730 (WIIDGIVNGIGILSFFGGEGM), and 738-758 (IPSYLFGLIIGNILMLIILII).

This sequence belongs to the complex I subunit 5 family. NDH is composed of at least 16 different subunits, 5 of which are encoded in the nucleus.

The protein localises to the plastid. Its subcellular location is the chloroplast thylakoid membrane. The enzyme catalyses a plastoquinone + NADH + (n+1) H(+)(in) = a plastoquinol + NAD(+) + n H(+)(out). It carries out the reaction a plastoquinone + NADPH + (n+1) H(+)(in) = a plastoquinol + NADP(+) + n H(+)(out). Functionally, NDH shuttles electrons from NAD(P)H:plastoquinone, via FMN and iron-sulfur (Fe-S) centers, to quinones in the photosynthetic chain and possibly in a chloroplast respiratory chain. The immediate electron acceptor for the enzyme in this species is believed to be plastoquinone. Couples the redox reaction to proton translocation, and thus conserves the redox energy in a proton gradient. The protein is NAD(P)H-quinone oxidoreductase subunit 5, chloroplastic (ndhF) of Angiopteris evecta (Mule's foot fern).